Consider the following 282-residue polypeptide: MTAPRDPDALIRRAGRPNPDFDQHFLIDDRVLDRIPTYADGFDRGHVLEIGAGTGALTDRLLSVADRVTAVERDESYASFLREEFADAIAAGDLDVVAGDALAVDLPAFTCAVSNLPYGVASEVTFRLLPAGKPMVLMYQLEFAERMAADPGTSEYGRLSVATQHYADVSIVETVPAAAFDPQPRVESAVVRVTPRDPDYVVADEAFFLSFVKALFTQRRKTTRNAIRNTAHISGLDDPDAVVAAVDDDVLGTRPGSLSPATFAALANVAWGVETAPGPDPQ.

Residues histidine 24, leucine 26, glycine 51, glutamate 72, aspartate 100, and asparagine 115 each coordinate S-adenosyl-L-methionine.

It belongs to the class I-like SAM-binding methyltransferase superfamily. rRNA adenine N(6)-methyltransferase family. RsmA subfamily.

Its subcellular location is the cytoplasm. Its function is as follows. Specifically dimethylates two adjacent adenosines in the loop of a conserved hairpin near the 3'-end of 16S rRNA in the 30S particle. May play a critical role in biogenesis of 30S subunits. The protein is Probable ribosomal RNA small subunit methyltransferase A of Halobacterium salinarum (strain ATCC 29341 / DSM 671 / R1).